The sequence spans 314 residues: MLGNYSSATEFFLLGFPGSQEVCRILFATFFLLYAVTVMGNVVIIITVCVDKCLQSPIYFFLGHLCVLEILITSTAVPFMLWGLLLPSTQIMSLTACAAQLYLYLSLGTLELALMGVMAVDRYVAVCNPLRYNIIMNSSTFIWVIIVSWVLGFLSEIWPVYATFQLTFCKSSVLDHFYCDRGQLLKVSCEDTLFREFILFLMAVFIIIGSLIPTIVSYTYIISTNLKIPSASGWRKSFSTCASHFTYVVIGYGSCLFLYVKPKQTQAAEYNRVVSLLVLVVTPFLNPFIFTLRNDKFIQAFGDGMKHCYKLLKN.

Topologically, residues 1–24 (MLGNYSSATEFFLLGFPGSQEVCR) are extracellular. N-linked (GlcNAc...) asparagine glycosylation is present at N4. The helical transmembrane segment at 25 to 45 (ILFATFFLLYAVTVMGNVVII) threads the bilayer. At 46 to 64 (ITVCVDKCLQSPIYFFLGH) the chain is on the cytoplasmic side. A helical transmembrane segment spans residues 65 to 85 (LCVLEILITSTAVPFMLWGLL). Residues 86-99 (LPSTQIMSLTACAA) lie on the Extracellular side of the membrane. C97 and C179 are joined by a disulfide. Residues 100-120 (QLYLYLSLGTLELALMGVMAV) traverse the membrane as a helical segment. Residues 121-140 (DRYVAVCNPLRYNIIMNSST) lie on the Cytoplasmic side of the membrane. Residues 141-161 (FIWVIIVSWVLGFLSEIWPVY) form a helical membrane-spanning segment. Residues 162–196 (ATFQLTFCKSSVLDHFYCDRGQLLKVSCEDTLFRE) are Extracellular-facing. The chain crosses the membrane as a helical span at residues 197–217 (FILFLMAVFIIIGSLIPTIVS). Over 218-239 (YTYIISTNLKIPSASGWRKSFS) the chain is Cytoplasmic. Residues 240-260 (TCASHFTYVVIGYGSCLFLYV) form a helical membrane-spanning segment. Topologically, residues 261–271 (KPKQTQAAEYN) are extracellular. Residues 272–292 (RVVSLLVLVVTPFLNPFIFTL) traverse the membrane as a helical segment. Over 293–314 (RNDKFIQAFGDGMKHCYKLLKN) the chain is Cytoplasmic.

The protein belongs to the G-protein coupled receptor 1 family.

It is found in the cell membrane. Its function is as follows. Odorant receptor. The protein is Olfactory receptor 9A1 (OR9A1P) of Homo sapiens (Human).